We begin with the raw amino-acid sequence, 371 residues long: Chaperone protein DnaJ (371 aa).

The region spanning 5–70 (SYYDILGVSK…KKRQAYDQFG (66 aa)) is the J domain. The segment at 139–217 (GREYKIEIPR…CGGQGLQEKR (79 aa)) adopts a CR-type zinc-finger fold. Positions 152, 155, 169, 172, 191, 194, 205, and 208 each coordinate Zn(2+). CXXCXGXG motif repeat units follow at residues 152 to 159 (CGDCNGSG), 169 to 176 (CPDCGGSG), 191 to 198 (CPTCRGKG), and 205 to 212 (CKTCGGQG).

This sequence belongs to the DnaJ family. As to quaternary structure, homodimer. Requires Zn(2+) as cofactor.

It is found in the cytoplasm. Functionally, participates actively in the response to hyperosmotic and heat shock by preventing the aggregation of stress-denatured proteins and by disaggregating proteins, also in an autonomous, DnaK-independent fashion. Unfolded proteins bind initially to DnaJ; upon interaction with the DnaJ-bound protein, DnaK hydrolyzes its bound ATP, resulting in the formation of a stable complex. GrpE releases ADP from DnaK; ATP binding to DnaK triggers the release of the substrate protein, thus completing the reaction cycle. Several rounds of ATP-dependent interactions between DnaJ, DnaK and GrpE are required for fully efficient folding. Also involved, together with DnaK and GrpE, in the DNA replication of plasmids through activation of initiation proteins. This is Chaperone protein DnaJ from Leptospira borgpetersenii serovar Hardjo-bovis (strain JB197).